The sequence spans 479 residues: Phosphoglycerate kinase, glycosomal (479 aa).

Positions 23, 24, 25, 26, 39, 61, 62, 64, 65, 132, 168, and 169 each coordinate (2R)-3-phosphoglycerate. ADP contacts are provided by Gly-214 and Ala-215. Gly-214 provides a ligand contact to CDP. AMP-binding residues include Ala-215 and Lys-216. Ala-215 lines the ATP pocket. Ala-215 is a Mg(2+) binding site. Lys-216 contacts (2R)-3-phosphoglycerate. Asp-219 serves as a coordination point for CDP. Asp-219 lines the Mg(2+) pocket. 2 residues coordinate ADP: Lys-220 and Gly-238. Lys-220 provides a ligand contact to AMP. Lys-220 contributes to the ATP binding site. Gly-238 contributes to the CDP binding site. Residues Ala-239 and Ala-311 each contribute to the AMP site. Residues Ala-239 and Ala-311 each coordinate ATP. The ADP site is built by Ala-311 and Asn-335. Gly-336 and Phe-341 together coordinate CDP. ADP is bound by residues Phe-341, Glu-342, Asp-374, and Ser-375. Glu-342 lines the AMP pocket. Residues Glu-342, Asp-374, and Ser-375 each contribute to the ATP site. Asp-374 is a Mg(2+) binding site.

This sequence belongs to the phosphoglycerate kinase family. As to quaternary structure, monomer. Requires Mg(2+) as cofactor.

It localises to the glycosome. It carries out the reaction (2R)-3-phosphoglycerate + ATP = (2R)-3-phospho-glyceroyl phosphate + ADP. It participates in carbohydrate degradation; glycolysis; pyruvate from D-glyceraldehyde 3-phosphate: step 2/5. The sequence is that of Phosphoglycerate kinase, glycosomal (PGKC) from Leishmania major.